A 22-amino-acid chain; its full sequence is Large ribosomal subunit protein bL32 (22 aa).

The disordered stretch occupies residues 1–22 (CVQQNKKSRSARDMXXSXDALE). The span at 13 to 22 (DMXXSXDALE) shows a compositional bias: low complexity.

It belongs to the bacterial ribosomal protein bL32 family.

The chain is Large ribosomal subunit protein bL32 (rpmF) from Ectopseudomonas mendocina (Pseudomonas mendocina).